The following is a 321-amino-acid chain: Aspartate carbamoyltransferase catalytic subunit (321 aa).

The carbamoyl phosphate site is built by Arg-65 and Thr-66. Residue Lys-93 participates in L-aspartate binding. Carbamoyl phosphate is bound by residues Arg-115, His-143, and Gln-146. Residues Arg-176 and Arg-230 each contribute to the L-aspartate site. 2 residues coordinate carbamoyl phosphate: Gly-271 and Pro-272.

Belongs to the aspartate/ornithine carbamoyltransferase superfamily. ATCase family. In terms of assembly, heterododecamer (2C3:3R2) of six catalytic PyrB chains organized as two trimers (C3), and six regulatory PyrI chains organized as three dimers (R2).

It carries out the reaction carbamoyl phosphate + L-aspartate = N-carbamoyl-L-aspartate + phosphate + H(+). Its pathway is pyrimidine metabolism; UMP biosynthesis via de novo pathway; (S)-dihydroorotate from bicarbonate: step 2/3. Functionally, catalyzes the condensation of carbamoyl phosphate and aspartate to form carbamoyl aspartate and inorganic phosphate, the committed step in the de novo pyrimidine nucleotide biosynthesis pathway. This chain is Aspartate carbamoyltransferase catalytic subunit, found in Bartonella henselae (strain ATCC 49882 / DSM 28221 / CCUG 30454 / Houston 1) (Rochalimaea henselae).